The primary structure comprises 180 residues: Diphosphoinositol polyphosphate phosphohydrolase 2 (180 aa).

At methionine 1 the chain carries N-acetylmethionine. Residues arginine 10, 18–20, and 39–41 contribute to the substrate site; these read KKR and SSR. Positions 18-144 constitute a Nudix hydrolase domain; sequence KKRAACLCFR…VHAEYLEKLK (127 aa). Mg(2+)-binding residues include glycine 50 and glutamate 66. The Nudix box motif lies at 51 to 72; the sequence is GGMEPEEEPGGAAVREVYEEAG. The active-site Proton acceptor is the glutamate 69. Glutamate 70 contacts Mg(2+). Substrate is bound by residues 89–91, arginine 115, and lysine 133; that span reads RKH.

Belongs to the Nudix hydrolase family. DIPP subfamily. Mg(2+) is required as a cofactor. The cofactor is Mn(2+). Expressed in heart and, at lower level in skeletal muscle, pancreas and kidney.

The protein resides in the cytoplasm. It carries out the reaction diphospho-myo-inositol polyphosphate + H2O = myo-inositol polyphosphate + phosphate.. It catalyses the reaction 5-diphospho-1D-myo-inositol 1,2,3,4,6-pentakisphosphate + H2O = 1D-myo-inositol hexakisphosphate + phosphate + H(+). The enzyme catalyses 3,5-bis(diphospho)-1D-myo-inositol 1,2,4,6-tetrakisphosphate + H2O = 3-diphospho-1D-myo-inositol 1,2,4,5,6-pentakisphosphate + phosphate + 2 H(+). The catalysed reaction is 5-diphospho-1D-myo-inositol 1,3,4,6-tetrakisphosphate + H2O = 1D-myo-inositol 1,3,4,5,6-pentakisphosphate + phosphate + H(+). It carries out the reaction P(1),P(6)-bis(5'-adenosyl) hexaphosphate + H2O = 2 ATP + 2 H(+). It catalyses the reaction P(1),P(5)-bis(5'-adenosyl) pentaphosphate + H2O = ADP + ATP + 2 H(+). The enzyme catalyses 5-phospho-alpha-D-ribose 1-diphosphate + H2O = alpha-D-ribose 1,5-bisphosphate + phosphate + H(+). In terms of biological role, cleaves the beta-phosphate from diphosphoinositol polyphosphates such as PP-InsP5 (diphosphoinositol pentakisphosphate), PP-InsP4 (diphosphoinositol tetrakisphosphate) and [PP]2-InsP4 (bisdiphosphoinositol tetrakisphosphate), suggesting that it may play a role in signal transduction. Diadenosine polyphosphates, particularly Ap6A (P(1),P(6)-bis(5a-adenosyl) hexaphosphate) and Ap5A (P(1),P(5)-bis(5'-adenosyl) pentaphosphate) are downstream effectors of a signaling cascade that regulates cardiac KATP channels, can also be substrates, although with lower preference than the diphosphoinositol polyphosphates. Can also catalyze the hydrolysis of 5-phosphoribose 1-diphosphate, generating the glycolytic activator ribose 1,5-bisphosphate. Does not play a role in U8 snoRNA decapping activity. Binds U8 snoRNA. This chain is Diphosphoinositol polyphosphate phosphohydrolase 2, found in Homo sapiens (Human).